Reading from the N-terminus, the 231-residue chain is Chalcone--flavanone isomerase (231 aa).

Substrate contacts are provided by Thr-46, Asn-111, and Ser-188.

Belongs to the chalcone isomerase family. Pericarp.

It catalyses the reaction a chalcone = a flavanone.. It functions in the pathway secondary metabolite biosynthesis; flavonoid biosynthesis. Catalyzes the intramolecular cyclization of bicyclic chalcones into tricyclic (S)-flavanones. Responsible for the isomerization of 4,2',4',6'-tetrahydroxychalcone (also termed chalcone) into naringenin. This chain is Chalcone--flavanone isomerase (CHI), found in Zea mays (Maize).